Here is a 201-residue protein sequence, read N- to C-terminus: Recombination protein RecR (201 aa).

Residues 57–74 (CRICGNITENSVNPCAIC) form a C4-type zinc finger. A Toprim domain is found at 82-178 (STVFVVENSR…KVTRLAHGLA (97 aa)).

It belongs to the RecR family.

Functionally, may play a role in DNA repair. It seems to be involved in an RecBC-independent recombinational process of DNA repair. It may act with RecF and RecO. This Leuconostoc citreum (strain KM20) protein is Recombination protein RecR.